The sequence spans 349 residues: DNA repair protein XRCC3 (349 aa).

Met1 bears the N-acetylmethionine mark. Position 107-114 (107-114 (GCSSAGKT)) interacts with ATP.

Belongs to the RecA family. RAD51 subfamily. As to quaternary structure, interacts with RAD51C and RAD51. Part of the CX3 complex consisting of RAD51C and XRCC3; the complex has a ring-like structure arranged into a flat disc around a central channel; CX3 can interact with RAD51 in vitro. Forms a complex with FANCD2, BRCA2 and phosphorylated FANCG. Interacts with SWSAP1 and ZSWIM7; involved in homologous recombination repair. Interacts directly with PALB2 which may serve as a scaffold for a HR complex containing PALB2, BRCA2, RAD51C, RAD51 and XRCC3.

It localises to the nucleus. The protein localises to the cytoplasm. Its subcellular location is the perinuclear region. It is found in the mitochondrion matrix. Involved in the homologous recombination repair (HRR) pathway of double-stranded DNA, thought to repair chromosomal fragmentation, translocations and deletions. Part of the RAD21 paralog protein complex CX3 which acts in the BRCA1-BRCA2-dependent HR pathway. Upon DNA damage, CX3 acts downstream of RAD51 recruitment; the complex binds predominantly to the intersection of the four duplex arms of the Holliday junction (HJ) and to junctions of replication forks. Involved in HJ resolution and thus in processing HR intermediates late in the DNA repair process; the function may be linked to the CX3 complex and seems to involve GEN1 during mitotic cell cycle progression. Part of a PALB2-scaffolded HR complex containing BRCA2 and RAD51C and which is thought to play a role in DNA repair by HR. Plays a role in regulating mitochondrial DNA copy number under conditions of oxidative stress in the presence of RAD51 and RAD51C. This chain is DNA repair protein XRCC3 (Xrcc3), found in Mus musculus (Mouse).